A 228-amino-acid chain; its full sequence is UPF0173 metal-dependent hydrolase BLi03080/BL00413 (228 aa).

This sequence belongs to the UPF0173 family.

The chain is UPF0173 metal-dependent hydrolase BLi03080/BL00413 from Bacillus licheniformis (strain ATCC 14580 / DSM 13 / JCM 2505 / CCUG 7422 / NBRC 12200 / NCIMB 9375 / NCTC 10341 / NRRL NRS-1264 / Gibson 46).